Reading from the N-terminus, the 305-residue chain is FMRFamide-related peptides type HF-4 (305 aa).

The N-terminal stretch at 1 to 19 (MTSLCLTIAPAVLSLICLS) is a signal peptide. A phenylalanine amide mark is found at phenylalanine 36, phenylalanine 47, and phenylalanine 66. Isoleucine 75 carries the isoleucine amide modification. Residues phenylalanine 84 and phenylalanine 93 each carry the phenylalanine amide modification. Isoleucine 102 carries the isoleucine amide modification. Phenylalanine amide is present on residues phenylalanine 111, phenylalanine 120, phenylalanine 129, phenylalanine 138, phenylalanine 147, phenylalanine 156, and phenylalanine 165. The propeptide occupies 168 to 305 (SVDGEIEAGV…EHKQEYMRFG (138 aa)).

The protein belongs to the FARP (FMRFamide related peptide) family. Central nervous system.

It is found in the secreted. Can function as both cardioregulatory hormones and transmitters and may regulate cardiovascular function. This is FMRFamide-related peptides type HF-4 from Cornu aspersum (Brown garden snail).